Consider the following 292-residue polypeptide: MEKLIEKANNLMEALPYIRRFAGKTFVIKYGGHAMSDEKLKESFALDVIMLRSLGINAVIVHGGGPQINQTLKRYGIVSQFVKGMRVTDSETMAVVEMVLVGQVNKEVVGYLNQHGGRAVGLSGKDGTLLLSKKLLQDVVGDDGTTEQVDMGYVGDVVKVNTDLLKALENGNYLPVIAPVGVGPQGESYNINADLVAGRVAAALNAEKLILLTDIEGVKDKAGQLLSSIAVADMHRLIREEAITGGMIPKVVCCADALEEGVKKAHIIDGRVEHAVLLEIFTDVGIGTEIQK.

Substrate contacts are provided by residues 64 to 65 (GG), R86, and N190.

It belongs to the acetylglutamate kinase family. ArgB subfamily.

It localises to the cytoplasm. It carries out the reaction N-acetyl-L-glutamate + ATP = N-acetyl-L-glutamyl 5-phosphate + ADP. Its pathway is amino-acid biosynthesis; L-arginine biosynthesis; N(2)-acetyl-L-ornithine from L-glutamate: step 2/4. In terms of biological role, catalyzes the ATP-dependent phosphorylation of N-acetyl-L-glutamate. This chain is Acetylglutamate kinase, found in Pelobacter propionicus (strain DSM 2379 / NBRC 103807 / OttBd1).